Reading from the N-terminus, the 1050-residue chain is Integrin alpha-5 (1050 aa).

Positions 1-32 are cleaved as a signal peptide; sequence MQLPRGSRVPGLVATFLFPVLCALLTFSSVRG. Topologically, residues 33–996 are extracellular; the sequence is FNLAVEQPAV…IHWAKPESSY (964 aa). FG-GAP repeat units follow at residues 34–99, 116–175, 183–235, 249–301, 302–367, 368–426, and 430–493; these read NLAV…GTNC, DTPQ…NFTT, RTDF…QEAY, QTRQ…GTDL, RSLY…MEST, PHLI…GVDS, and QVLQ…ISPN. N-linked (GlcNAc...) asparagine glycans are attached at residues Asn-75, Asn-95, and Asn-98. Disulfide bonds link Cys-90/Cys-99 and Cys-145/Cys-166. Asn-172 carries an N-linked (GlcNAc...) asparagine glycan. A disulfide bond links Cys-182 and Cys-195. Ca(2+) contacts are provided by Glu-270, Ser-272, Asp-274, Thr-276, and Asp-278. Asn-287, Asn-297, and Asn-306 each carry an N-linked (GlcNAc...) asparagine glycan. Ca(2+)-binding residues include Asp-324, Asn-326, Asp-328, Leu-330, Asp-332, Asp-390, Asp-392, Asp-394, Asp-398, Asp-454, Asp-456, Asn-458, Tyr-460, and Asp-462. Cys-502 and Cys-513 are oxidised to a cystine. N-linked (GlcNAc...) asparagine glycosylation is found at Asn-507, Asn-515, Asn-521, and Asn-600. Cys-519 and Cys-575 form a disulfide bridge. Cysteines 636 and 642 form a disulfide. N-linked (GlcNAc...) asparagine glycosylation is found at Asn-649, Asn-714, Asn-763, and Asn-861. Cys-708 and Cys-721 are disulfide-bonded. 3 cysteine pairs are disulfide-bonded: Cys-839-Cys-958, Cys-862-Cys-922, and Cys-910-Cys-917. Residues 997–1022 form a helical membrane-spanning segment; sequence GVPLWIIILAILIGLLLLALLIYVLY. Topologically, residues 1023-1050 are cytoplasmic; it reads KLGFFKRSYQYGTAMEKAELKPQAASEA. Positions 1025-1029 match the GFFKR motif motif; sequence GFFKR.

The protein belongs to the integrin alpha chain family. Heterodimer of an alpha and a beta subunit. The alpha subunit is composed of a heavy and a light chain linked by a disulfide bond. Alpha-5 associates with beta-1.

Its subcellular location is the cell membrane. The protein localises to the cell junction. The protein resides in the focal adhesion. Functionally, integrin alpha-5/beta-1 (ITGA5:ITGB1) is a receptor for fibronectin. It recognizes the sequence R-G-D in its ligands. ITGA5:ITGB1 acts as a receptor for fibrillin-1 (FBN1) and mediates R-G-D-dependent cell adhesion to FBN1. ITGA5:ITGB1 acts as a receptor for fibronectin (FN1) and mediates R-G-D-dependent cell adhesion to FN1. ITGA5:ITGB1 is a receptor for IL1B and binding is essential for IL1B signaling. ITGA5:ITGB3 is a receptor for soluble CD40LG and is required for CD40/CD40LG signaling. This chain is Integrin alpha-5 (itga5), found in Xenopus laevis (African clawed frog).